Consider the following 233-residue polypeptide: UPF0758 protein TTE0897 (233 aa).

Positions 108-230 (SVTSPEDVIN…GISLKEKGYY (123 aa)) constitute an MPN domain. H179, H181, and D192 together coordinate Zn(2+). The short motif at 179–192 (HNHPSGDPTPSRED) is the JAMM motif element.

Belongs to the UPF0758 family.

In Caldanaerobacter subterraneus subsp. tengcongensis (strain DSM 15242 / JCM 11007 / NBRC 100824 / MB4) (Thermoanaerobacter tengcongensis), this protein is UPF0758 protein TTE0897.